Reading from the N-terminus, the 152-residue chain is Dynein light chain Tctex-type protein 2B (152 aa).

Belongs to the dynein light chain Tctex-type family. Light chain of the cytoplasmic dynein complex 2, a multisubunit complex composed at least of eleven different proteins. The cytoplasmic dynein 2 complex consists of two catalytic heavy chains (HCs) and a number of non-catalytic subunits presented by intermediate chains (ICs), light intermediate chains (LICs) and light chains (LCs). Among them, a heavy chain (DYNC2H1), two intermediate chains (DYNC2I2 and DYNC2I1), a light intermediate chain (DYNC2LI1), and a light chain (DYNLT2B) are unique to the dynein-2 complex, but a subset of the light chains are also shared by dynein-1 and dynein-2 complexes. The dimer DYNLT2B-DYNLT1/DYNLT3 interacts with DYNC2I1; this interaction is crucial for retrograde trafficking of ciliary proteins.

It localises to the dynein axonemal particle. Acts as one of several non-catalytic accessory components of the cytoplasmic dynein 2 complex (dynein-2 complex), a motor protein complex that drives the movement of cargos along microtubules within cilia and flagella in concert with the intraflagellar transport (IFT) system. Required for proper retrograde ciliary transport. This Bos taurus (Bovine) protein is Dynein light chain Tctex-type protein 2B (DYNLT2B).